Reading from the N-terminus, the 534-residue chain is Peptide chain release factor 3 (534 aa).

The 270-residue stretch at 9–278 folds into the tr-type G domain; it reads ARRRTFAIIS…FFVEHAPPPQ (270 aa). Residues 18 to 25, 86 to 90, and 140 to 143 each bind GTP; these read SHPDAGKT, DTPGH, and NKLD.

This sequence belongs to the TRAFAC class translation factor GTPase superfamily. Classic translation factor GTPase family. PrfC subfamily.

Its subcellular location is the cytoplasm. Increases the formation of ribosomal termination complexes and stimulates activities of RF-1 and RF-2. It binds guanine nucleotides and has strong preference for UGA stop codons. It may interact directly with the ribosome. The stimulation of RF-1 and RF-2 is significantly reduced by GTP and GDP, but not by GMP. In Xanthomonas axonopodis pv. citri (strain 306), this protein is Peptide chain release factor 3.